The primary structure comprises 318 residues: Methionyl-tRNA formyltransferase (318 aa).

A (6S)-5,6,7,8-tetrahydrofolate-binding site is contributed by Ser112 to Pro115.

Belongs to the Fmt family.

It carries out the reaction L-methionyl-tRNA(fMet) + (6R)-10-formyltetrahydrofolate = N-formyl-L-methionyl-tRNA(fMet) + (6S)-5,6,7,8-tetrahydrofolate + H(+). Its function is as follows. Attaches a formyl group to the free amino group of methionyl-tRNA(fMet). The formyl group appears to play a dual role in the initiator identity of N-formylmethionyl-tRNA by promoting its recognition by IF2 and preventing the misappropriation of this tRNA by the elongation apparatus. The sequence is that of Methionyl-tRNA formyltransferase from Shewanella frigidimarina (strain NCIMB 400).